The sequence spans 122 residues: Small ribosomal subunit protein uS13 (122 aa).

Positions 95–122 are disordered; sequence QLPVRGQRTHTNARTRKGKAKPIAGKKK.

The protein belongs to the universal ribosomal protein uS13 family. In terms of assembly, part of the 30S ribosomal subunit. Forms a loose heterodimer with protein S19. Forms two bridges to the 50S subunit in the 70S ribosome.

Located at the top of the head of the 30S subunit, it contacts several helices of the 16S rRNA. In the 70S ribosome it contacts the 23S rRNA (bridge B1a) and protein L5 of the 50S subunit (bridge B1b), connecting the 2 subunits; these bridges are implicated in subunit movement. Contacts the tRNAs in the A and P-sites. The polypeptide is Small ribosomal subunit protein uS13 (Beijerinckia indica subsp. indica (strain ATCC 9039 / DSM 1715 / NCIMB 8712)).